The following is a 210-amino-acid chain: Phosphate propanoyltransferase (210 aa).

26–28 (VSN) contacts CoA. Zn(2+) contacts are provided by His30 and His32. CoA contacts are provided by Lys71 and Arg78. Position 84 (Arg84) interacts with phosphate. Glu90, His138, His140, and His186 together coordinate Zn(2+). CoA is bound at residue Asn193.

This sequence belongs to the PduL family. As to quaternary structure, monomer, when purified in the absence of the encapsulation peptide (EP, residues 1-27). The EP may influence oligomerization. Zn(2+) serves as cofactor.

Its subcellular location is the bacterial microcompartment. The catalysed reaction is propanoyl-CoA + phosphate = propanoyl phosphate + CoA. It functions in the pathway polyol metabolism; 1,2-propanediol degradation. In terms of biological role, involved in 1,2-propanediol (1,2-PD) utilization in the bacterial microcompartment (BMC) dedicated to 1,2-PD degradation by catalyzing the conversion of propanoyl-CoA to propanoyl-phosphate. Also able to catalyze the reverse reaction. Also has phosphate acetyltransferase activity to a lesser extent. Required for optimal growth on 1,2-PD when the BMC is intact. CoA is regenerated within the BMC (for use by PduP) via this enzyme, although there must also be cofactor transport across the BMC. Directly targeted to the BMC. Functionally, the 1,2-PD-specific bacterial microcompartment (BMC) concentrates low levels of 1,2-PD catabolic enzymes, concentrates volatile reaction intermediates thus enhancing pathway flux and keeps the level of toxic, mutagenic propionaldehyde low. The protein is Phosphate propanoyltransferase of Salmonella typhimurium (strain LT2 / SGSC1412 / ATCC 700720).